The chain runs to 154 residues: 6,7-dimethyl-8-ribityllumazine synthase (154 aa).

5-amino-6-(D-ribitylamino)uracil contacts are provided by residues phenylalanine 26, 60 to 62 (ALE), and 84 to 86 (CII). Position 89-90 (89-90 (ET)) interacts with (2S)-2-hydroxy-3-oxobutyl phosphate. Catalysis depends on histidine 92, which acts as the Proton donor. Asparagine 117 is a 5-amino-6-(D-ribitylamino)uracil binding site. A (2S)-2-hydroxy-3-oxobutyl phosphate-binding site is contributed by arginine 131.

This sequence belongs to the DMRL synthase family.

The catalysed reaction is (2S)-2-hydroxy-3-oxobutyl phosphate + 5-amino-6-(D-ribitylamino)uracil = 6,7-dimethyl-8-(1-D-ribityl)lumazine + phosphate + 2 H2O + H(+). It functions in the pathway cofactor biosynthesis; riboflavin biosynthesis; riboflavin from 2-hydroxy-3-oxobutyl phosphate and 5-amino-6-(D-ribitylamino)uracil: step 1/2. Its function is as follows. Catalyzes the formation of 6,7-dimethyl-8-ribityllumazine by condensation of 5-amino-6-(D-ribitylamino)uracil with 3,4-dihydroxy-2-butanone 4-phosphate. This is the penultimate step in the biosynthesis of riboflavin. This chain is 6,7-dimethyl-8-ribityllumazine synthase, found in Acidovorax sp. (strain JS42).